Reading from the N-terminus, the 335-residue chain is UDP-N-acetylenolpyruvoylglucosamine reductase 1 (335 aa).

Residues 36-202 (RIGGPAAVFA…LEVELLLKPG (167 aa)) form the FAD-binding PCMH-type domain. The active site involves Arg181. The Proton donor role is filled by Ser231. The active site involves Glu306.

This sequence belongs to the MurB family. FAD is required as a cofactor.

It localises to the cytoplasm. It carries out the reaction UDP-N-acetyl-alpha-D-muramate + NADP(+) = UDP-N-acetyl-3-O-(1-carboxyvinyl)-alpha-D-glucosamine + NADPH + H(+). It participates in cell wall biogenesis; peptidoglycan biosynthesis. Functionally, cell wall formation. The protein is UDP-N-acetylenolpyruvoylglucosamine reductase 1 (murB1) of Corynebacterium glutamicum (strain ATCC 13032 / DSM 20300 / JCM 1318 / BCRC 11384 / CCUG 27702 / LMG 3730 / NBRC 12168 / NCIMB 10025 / NRRL B-2784 / 534).